Here is a 496-residue protein sequence, read N- to C-terminus: Solute carrier family 2, facilitated glucose transporter member 11 (496 aa).

The Cytoplasmic portion of the chain corresponds to 1-11 (MRALRRLIQGR). The chain crosses the membrane as a helical span at residues 12–32 (ILLLTICAAGIGGTFQFGYNL). At 33 to 61 (SIINAPTLHIQEFTNETWQARTGEPLPDH) the chain is on the extracellular side. A glycan (N-linked (GlcNAc...) asparagine) is linked at N47. A helical membrane pass occupies residues 62–82 (LVLLMWSLIVSLYPLGGLFGA). Residues 83–97 (LLAGPLAITLGRKKS) are Cytoplasmic-facing. Residues 98-118 (LLVNNIFVVSAAILFGFSRKA) traverse the membrane as a helical segment. Over 119-128 (GSFEMIMLGR) the chain is Extracellular. Residues 129-149 (LLVGVNAGVSMNIQPMYLGES) traverse the membrane as a helical segment. At 150–157 (APKELRGA) the chain is on the cytoplasmic side. Residues 158-178 (VAMSSAIFTALGIVMGQVVGL) form a helical membrane-spanning segment. At 179 to 187 (RELLGGPQA) the chain is on the extracellular side. The helical transmembrane segment at 188-208 (WPLLLASCLVPGALQLASLPL) threads the bilayer. The Cytoplasmic portion of the chain corresponds to 209–273 (LPESPRYLLI…LFQHRALRRQ (65 aa)). A helical transmembrane segment spans residues 274–294 (VTSLVVLGSAMELCGNDSVYA). At 295–311 (YASSVFRKAGVPEAKIQ) the chain is on the extracellular side. Residues 312–332 (YAIIGTGSCELLTAVVSCVVI) form a helical membrane-spanning segment. Topologically, residues 333–338 (ERVGRR) are cytoplasmic. A helical membrane pass occupies residues 339 to 359 (VLLIGGYSLMTCWGSIFTVAL). The Extracellular portion of the chain corresponds to 360–364 (CLQSS). Residues 365–385 (FPWTLYLAMACIFAFILSFGI) form a helical membrane-spanning segment. Residues 386–408 (GPAGVTGILATELFDQMARPAAC) lie on the Cytoplasmic side of the membrane. The helical transmembrane segment at 409–429 (MVCGALMWIMLILVGLGFPFI) threads the bilayer. Topologically, residues 430–435 (MEALSH) are extracellular. The helical transmembrane segment at 436 to 456 (FLYVPFLGVCVCGAIYTGLFL) threads the bilayer. Topologically, residues 457–496 (PETKGKTFQEISKELHRLNFPRRAQGPTWRSLEVIQSTEL) are cytoplasmic.

This sequence belongs to the major facilitator superfamily. Sugar transporter (TC 2.A.1.1) family. Glucose transporter subfamily. In terms of tissue distribution, expressed in heart and skeletal muscle.

The protein resides in the cell membrane. It catalyses the reaction D-glucose(out) = D-glucose(in). Facilitative glucose transporter. This Homo sapiens (Human) protein is Solute carrier family 2, facilitated glucose transporter member 11.